The following is a 346-amino-acid chain: MMKRALTGIQASGKQHLGNYLGVMQSLIELQEQCQLFVFVADLHSITVDFQPQALKQNNFDLVRTLLAVGLDPQKACLFLQSDLLEHSMMGYLMMVQSNLGELQRMTQFKAKKAEQTRNPNGTLNIPTGLLTYPALMAGDILLYQPDIVPVGNDQKQHLELTRDLAQRIQKKFKLKLRLPQFVQNKDTNRIMDLFDPTKKMSKSSKNQNGVIYLDDPKEVVVKKIRQATTDSFNKIRFAPKTQPGVTNMLTILKALLKEPVNQSLTNQLGNDLEAYFSTKSYLDLKNALTEATVNLLVNIQRKREQISREQVFNCLQAGKNQAQATARTTLALFYDGFGLGSQNIK.

Residues 10 to 12 (QAS) and 18 to 19 (GN) each bind ATP. Residues 11 to 19 (ASGKQHLGN) carry the 'HIGH' region motif. Residue Asp140 coordinates L-tryptophan. ATP contacts are provided by residues 152 to 154 (GND), Ile191, and 200 to 204 (KMSKS). Residues 200-204 (KMSKS) carry the 'KMSKS' region motif.

Belongs to the class-I aminoacyl-tRNA synthetase family. In terms of assembly, homodimer.

The protein localises to the cytoplasm. It carries out the reaction tRNA(Trp) + L-tryptophan + ATP = L-tryptophyl-tRNA(Trp) + AMP + diphosphate + H(+). Functionally, catalyzes the attachment of tryptophan to tRNA(Trp). The chain is Tryptophan--tRNA ligase from Mycoplasma pneumoniae (strain ATCC 29342 / M129 / Subtype 1) (Mycoplasmoides pneumoniae).